The sequence spans 380 residues: Queuine tRNA-ribosyltransferase (380 aa).

Residue D96 is the Proton acceptor of the active site. Substrate is bound by residues D96 to F100, D150, Q193, and G220. Residues G251 to S257 are RNA binding. Catalysis depends on D270, which acts as the Nucleophile. An RNA binding; important for wobble base 34 recognition region spans residues T275–R279. Residues C308, C310, C313, and H339 each coordinate Zn(2+).

It belongs to the queuine tRNA-ribosyltransferase family. Homodimer. Within each dimer, one monomer is responsible for RNA recognition and catalysis, while the other monomer binds to the replacement base PreQ1. Zn(2+) is required as a cofactor.

The enzyme catalyses 7-aminomethyl-7-carbaguanine + guanosine(34) in tRNA = 7-aminomethyl-7-carbaguanosine(34) in tRNA + guanine. It participates in tRNA modification; tRNA-queuosine biosynthesis. Catalyzes the base-exchange of a guanine (G) residue with the queuine precursor 7-aminomethyl-7-deazaguanine (PreQ1) at position 34 (anticodon wobble position) in tRNAs with GU(N) anticodons (tRNA-Asp, -Asn, -His and -Tyr). Catalysis occurs through a double-displacement mechanism. The nucleophile active site attacks the C1' of nucleotide 34 to detach the guanine base from the RNA, forming a covalent enzyme-RNA intermediate. The proton acceptor active site deprotonates the incoming PreQ1, allowing a nucleophilic attack on the C1' of the ribose to form the product. After dissociation, two additional enzymatic reactions on the tRNA convert PreQ1 to queuine (Q), resulting in the hypermodified nucleoside queuosine (7-(((4,5-cis-dihydroxy-2-cyclopenten-1-yl)amino)methyl)-7-deazaguanosine). The protein is Queuine tRNA-ribosyltransferase of Streptococcus mutans serotype c (strain ATCC 700610 / UA159).